The following is a 620-amino-acid chain: Ferric/cupric reductase transmembrane component 7 (620 aa).

The Extracellular segment spans residues 1 to 45; sequence MIEERDLVLSNGIHCIADIHSELYARLKKESQAVTPWVYQKQYGK. A helical membrane pass occupies residues 46–66; the sequence is FVTYFVAVIIFLSLIKKLAFM. Residues 67 to 107 are Cytoplasmic-facing; it reads YYDSSEEFLPEKKNSPTTPSVFLARIMTKLVAFNRYICYRK. Residues 108–128 traverse the membrane as a helical segment; sequence FPTLIFSYLGIPTSVGTFLVV. Over 129 to 167 the chain is Extracellular; that stretch reads MATTLYTLLYCFVPHPFYRPCAGFGSPPLSVRAGIMAIS. Residues 161–320 form the Ferric oxidoreductase domain; that stretch reads AGIMAISLVS…LAVKGYLRPG (160 aa). Residues 168-188 form a helical membrane-spanning segment; sequence LVSFVFSLSGKINVIGWLVGL. The Cytoplasmic segment spans residues 189–194; the sequence is SYEKIN. The helical transmembrane segment at 195–215 threads the bilayer; it reads IYHQWASILCLFFSWVHVIPF. 2 residues coordinate heme: histidine 197 and histidine 211. The Extracellular segment spans residues 216–237; sequence LRQARHEGGYERMHQRWKASDM. A helical transmembrane segment spans residues 238–258; that stretch reads WRSGVPPILFLNLLWLSSLPI. Topologically, residues 259–265 are cytoplasmic; sequence ARRHFYE. The helical transmembrane segment at 266 to 286 threads the bilayer; it reads IFLQLHWILAVGFYISLFYHV. Residues histidine 271 and histidine 285 each contribute to the heme site. The Extracellular portion of the chain corresponds to 287–292; that stretch reads YPELNS. A helical membrane pass occupies residues 293–313; that stretch reads HMYLVATIVVWFAQLFYRLAV. The Cytoplasmic segment spans residues 314–620; it reads KGYLRPGRSF…CYLHSESFGY (307 aa). The 99-residue stretch at 321 to 419 folds into the FAD-binding FR-type domain; it reads RSFMASTIAN…DGPYGGIERD (99 aa). 369-375 contacts FAD; sequence HPFSIFP. The segment at 519-544 is disordered; it reads SDQSDLAKREKDTEFGQDDTESNSTF. The segment covering 523-532 has biased composition (basic and acidic residues); the sequence is DLAKREKDTE.

The protein belongs to the ferric reductase (FRE) family. The cofactor is FAD.

Its subcellular location is the cell membrane. It carries out the reaction 2 a Fe(II)-siderophore + NADP(+) + H(+) = 2 a Fe(III)-siderophore + NADPH. Functionally, cell surface metalloreductase. May be involved in copper homeostasis. This is Ferric/cupric reductase transmembrane component 7 (FRE7) from Saccharomyces cerevisiae (strain YJM789) (Baker's yeast).